The chain runs to 669 residues: MATERSRSAMDSPVPASMFAPEPSSPGAARAAAAAARLHGGFDSDCSEDGEALNGEPELDLTSKLVLVSPTSEQYDSLLRQMWERMDEGCGETIYVIGQGSDGTEYGLSEADMEASYATVKSMAEQIEADVILLRERQEAGGRVRDYLVRKRVGDNDFLEVRVAVVGNVDAGKSTLLGVLTHGELDNGRGFARQKLFRHKHEIESGRTSSVGNDILGFDSEGNVVNKPDSHGGSLEWTKICEKSTKVITFIDLAGHEKYLKTTVFGMTGHLPDFCMLMVGSNAGIVGMTKEHLGLALALNVPVFVVVTKIDMCPANILQETLKLLQRLLKSPGCRKIPVLVQSKDDVIVTASNFSSERMCPIFQISNVTGENLDLLKMFLNLLSPRTSYREEEPAEFQIDDTYSVPGVGTVVSGTTLRGLIKLNDTLLLGPDPLGNFLSIAVKSIHRKRMPVKEVRGGQTASFALKKIKRSSIRKGMVMVSPRLNPQASWEFEAEILVLHHPTTISPRYQAMVHCGSIRQTATILSMDKDCLRTGDKATVHFRFIKTPEYLHIDQRLVFREGRTKAVGTITKLLQTTNNSPMNSKPQQIKMQSTKKGPLTKRDEGGPSGGPAVGAPPPGDEASSVGAGQPAASSNLQPQPKPSSGGRRRGGQRHKVKSQGACVTPASGC.

Residues 1 to 32 form a disordered region; it reads MATERSRSAMDSPVPASMFAPEPSSPGAARAA. Residues S6, S8, S12, S24, S25, S44, S47, and S69 each carry the phosphoserine modification. The region spanning 158 to 389 is the tr-type G domain; the sequence is FLEVRVAVVG…LNLLSPRTSY (232 aa). A G1 region spans residues 167–174; the sequence is GNVDAGKS. Residue 167 to 174 participates in GTP binding; sequence GNVDAGKS. The interval 206-210 is G2; that stretch reads GRTSS. A G3 region spans residues 252–255; the sequence is DLAG. Residues 252-256 and 308-311 each bind GTP; these read DLAGH and TKID. The segment at 308 to 311 is G4; the sequence is TKID. The segment at 366-368 is G5; the sequence is SNV. Positions 573-595 are enriched in polar residues; sequence LLQTTNNSPMNSKPQQIKMQSTK. Residues 573–669 form a disordered region; it reads LLQTTNNSPM…GACVTPASGC (97 aa). S580 carries the phosphoserine modification. The span at 646 to 657 shows a compositional bias: basic residues; sequence GRRRGGQRHKVK.

It belongs to the TRAFAC class translation factor GTPase superfamily. Classic translation factor GTPase family. GTPBP1 subfamily. As to quaternary structure, interacts with EXOSC2/RRP4, EXOSC3/RRP40, EXOSC5/RRP46, HNRNPD, HNRNPR and SYNCRIP. Identified in a complex with AANAT mRNA, but does not bind mRNA by itself.

The protein resides in the cytoplasm. In terms of biological role, promotes degradation of target mRNA species. Plays a role in the regulation of circadian mRNA stability. Binds GTP and has GTPase activity. This Homo sapiens (Human) protein is GTP-binding protein 1 (GTPBP1).